We begin with the raw amino-acid sequence, 213 residues long: von Hippel-Lindau disease tumor suppressor (213 aa).

Residues 1–65 (MPRRAENWDE…AGRPRPVLRS (65 aa)) form a disordered region. Positions 8–54 (WDEAEVGAEEAGVEEYGPEEDGGEESGAEESGPEESGPEELGAEEEM) are enriched in acidic residues. 8 tandem repeats follow at residues 14–18 (GAEEA), 19–23 (GVEEY), 24–28 (GPEED), 29–33 (GGEES), 34–38 (GAEES), 39–43 (GPEES), 44–48 (GPEEL), and 49–53 (GAEEE). The interval 14 to 53 (GAEEAGVEEYGPEEDGGEESGAEESGPEESGPEELGAEEE) is 8 X 5 AA tandem repeats of G-[PAVG]-E-E-[DAYSLE]. An involved in binding to CCT complex region spans residues 100-155 (TLPPGTGRRIHSYRGHLWLFRDAGTHDGLLVNQTELFVPSLNVDGQPIFANITLPV). Residues 157 to 166 (TLKERCLQVV) form an interaction with Elongin BC complex region.

This sequence belongs to the VHL family. Component of the VCB (VHL-Elongin BC-CUL2) complex; this complex acts as a ubiquitin-ligase E3 and directs proteasome-dependent degradation of targeted proteins. Interacts with CUL2; this interaction is dependent on the integrity of the trimeric VCB complex. Interacts (via the beta domain) with HIF1A (via the NTAD domain); this interaction mediates degradation of HIF1A in normoxia and, in hypoxia, prevents ubiquitination and degradation of HIF1A by mediating hypoxia-induced translocation to the nucleus, a process which requires a hypoxia-dependent regulatory signal. Interacts with ADRB2; the interaction, in normoxia, is dependent on hydroxylation of ADRB2 and the subsequent VCB-mediated ubiquitination and degradation of ADRB2. Under hypoxia, hydroxylation, interaction with VHL, ubiquitination and subsequent degradation of ADRB2 are dramatically decreased. Interacts with RNF139, USP33 and JADE1. Found in a complex composed of LIMD1, VHL, EGLN1/PHD2, ELOB and CUL2. Isoform 1 and isoform 3 interact with LIMD1 (via LIM zinc-binding 2), AJUBA (via LIM domains) and WTIP (via LIM domains). Interacts with EPAS1. Interacts with CARD9. Interacts with DCUN1D1 independently of CUL2; this interaction engages DCUN1D1 in the VCB complex and triggers CUL2 neddylation and consequently cullin ring ligase (CRL) substrates polyubiquitylation. Interacts with ALAS1 (hydroxylated form). Interacts with IGFBP1. As to expression, expressed in the adult and fetal brain and kidney.

It is found in the cytoplasm. The protein resides in the cell membrane. It localises to the endoplasmic reticulum. Its subcellular location is the nucleus. It participates in protein modification; protein ubiquitination. Its function is as follows. Involved in the ubiquitination and subsequent proteasomal degradation via the von Hippel-Lindau ubiquitination complex. Seems to act as a target recruitment subunit in the E3 ubiquitin ligase complex and recruits hydroxylated hypoxia-inducible factor (HIF) under normoxic conditions. Involved in transcriptional repression through interaction with HIF1A, HIF1AN and histone deacetylases. Ubiquitinates, in an oxygen-responsive manner, ADRB2. Acts as a negative regulator of mTORC1 by promoting ubiquitination and degradation of RPTOR. In Homo sapiens (Human), this protein is von Hippel-Lindau disease tumor suppressor (VHL).